The sequence spans 197 residues: Holliday junction branch migration complex subunit RuvA (197 aa).

The segment at 1-64 (MYEYIKGKYI…EDFIGVYGFL (64 aa)) is domain I. The interval 65–144 (TKDELSMFKL…DILEEDDEQI (80 aa)) is domain II. The interval 145–149 (INKVA) is flexible linker. The domain III stretch occupies residues 149–197 (ADDKKVLEAVAALVTLGYSEKEANKVINSCDKNNSLEQIIKEALKYLMK).

The protein belongs to the RuvA family. Homotetramer. Forms an RuvA(8)-RuvB(12)-Holliday junction (HJ) complex. HJ DNA is sandwiched between 2 RuvA tetramers; dsDNA enters through RuvA and exits via RuvB. An RuvB hexamer assembles on each DNA strand where it exits the tetramer. Each RuvB hexamer is contacted by two RuvA subunits (via domain III) on 2 adjacent RuvB subunits; this complex drives branch migration. In the full resolvosome a probable DNA-RuvA(4)-RuvB(12)-RuvC(2) complex forms which resolves the HJ.

It is found in the cytoplasm. In terms of biological role, the RuvA-RuvB-RuvC complex processes Holliday junction (HJ) DNA during genetic recombination and DNA repair, while the RuvA-RuvB complex plays an important role in the rescue of blocked DNA replication forks via replication fork reversal (RFR). RuvA specifically binds to HJ cruciform DNA, conferring on it an open structure. The RuvB hexamer acts as an ATP-dependent pump, pulling dsDNA into and through the RuvAB complex. HJ branch migration allows RuvC to scan DNA until it finds its consensus sequence, where it cleaves and resolves the cruciform DNA. In Clostridium botulinum (strain ATCC 19397 / Type A), this protein is Holliday junction branch migration complex subunit RuvA.